The primary structure comprises 475 residues: Putative UDP-glucose glucosyltransferase (475 aa).

Belongs to the UDP-glycosyltransferase family.

In Fragaria ananassa (Strawberry), this protein is Putative UDP-glucose glucosyltransferase.